The following is a 243-amino-acid chain: Triosephosphate isomerase (243 aa).

9-11 contacts substrate; sequence NWK. Histidine 96 (electrophile) is an active-site residue. Residue glutamate 165 is the Proton acceptor of the active site. Substrate-binding positions include glycine 171, serine 204, and 225–226; that span reads GG.

Belongs to the triosephosphate isomerase family. Homodimer.

It localises to the cytoplasm. The enzyme catalyses D-glyceraldehyde 3-phosphate = dihydroxyacetone phosphate. Its pathway is carbohydrate biosynthesis; gluconeogenesis. It functions in the pathway carbohydrate degradation; glycolysis; D-glyceraldehyde 3-phosphate from glycerone phosphate: step 1/1. Its function is as follows. Involved in the gluconeogenesis. Catalyzes stereospecifically the conversion of dihydroxyacetone phosphate (DHAP) to D-glyceraldehyde-3-phosphate (G3P). The chain is Triosephosphate isomerase from Synechococcus sp. (strain CC9311).